The sequence spans 179 residues: Endoribonuclease YbeY (179 aa).

The Zn(2+) site is built by His141, His145, and His151.

It belongs to the endoribonuclease YbeY family. It depends on Zn(2+) as a cofactor.

It is found in the cytoplasm. Functionally, single strand-specific metallo-endoribonuclease involved in late-stage 70S ribosome quality control and in maturation of the 3' terminus of the 16S rRNA. This chain is Endoribonuclease YbeY, found in Synechocystis sp. (strain ATCC 27184 / PCC 6803 / Kazusa).